A 671-amino-acid polypeptide reads, in one-letter code: UvrABC system protein B (671 aa).

The Helicase ATP-binding domain maps to 31–414 (DGFEQGEKAQ…ELNQTDHKVE (384 aa)). 44-51 (GATGTGKT) serves as a coordination point for ATP. The short motif at 97 to 120 (YYDYYQPEAYVPQSDTYIEKDSSI) is the Beta-hairpin element. Residues 435–601 (QIDDLVGEVN…TIVKPIRDVI (167 aa)) form the Helicase C-terminal domain. The UVR domain occupies 630–665 (QNMIKTLTAQMQEAAKKLDFEEAANLRDAIMDLKKQ).

Belongs to the UvrB family. In terms of assembly, forms a heterotetramer with UvrA during the search for lesions. Interacts with UvrC in an incision complex.

It is found in the cytoplasm. Its function is as follows. The UvrABC repair system catalyzes the recognition and processing of DNA lesions. A damage recognition complex composed of 2 UvrA and 2 UvrB subunits scans DNA for abnormalities. Upon binding of the UvrA(2)B(2) complex to a putative damaged site, the DNA wraps around one UvrB monomer. DNA wrap is dependent on ATP binding by UvrB and probably causes local melting of the DNA helix, facilitating insertion of UvrB beta-hairpin between the DNA strands. Then UvrB probes one DNA strand for the presence of a lesion. If a lesion is found the UvrA subunits dissociate and the UvrB-DNA preincision complex is formed. This complex is subsequently bound by UvrC and the second UvrB is released. If no lesion is found, the DNA wraps around the other UvrB subunit that will check the other stand for damage. This Lactobacillus johnsonii (strain CNCM I-12250 / La1 / NCC 533) protein is UvrABC system protein B.